Consider the following 757-residue polypeptide: Polyribonucleotide nucleotidyltransferase (757 aa).

2 residues coordinate Mg(2+): Asp525 and Asp531. A KH domain is found at 591-650; sequence PRVISVNIPVDKIGELIGPKGKTINAIQDETGADISIEEDGAVYIGAVDGPSAEAARAQV. The S1 motif domain maps to 662–734; sequence GESFLGTVVK…DRGKLSLAPV (73 aa). The disordered stretch occupies residues 736 to 757; it reads EEAADQEGSAAASDGPEAPAEG.

Belongs to the polyribonucleotide nucleotidyltransferase family. Mg(2+) serves as cofactor.

Its subcellular location is the cytoplasm. It catalyses the reaction RNA(n+1) + phosphate = RNA(n) + a ribonucleoside 5'-diphosphate. Involved in mRNA degradation. Catalyzes the phosphorolysis of single-stranded polyribonucleotides processively in the 3'- to 5'-direction. The protein is Polyribonucleotide nucleotidyltransferase of Clavibacter sepedonicus (Clavibacter michiganensis subsp. sepedonicus).